The following is a 470-amino-acid chain: Cyclic AMP receptor-like protein D (470 aa).

The Extracellular segment spans residues 1-16 (MSSCSSLSMDDRVKIG). Residues 17–37 (YGSIAGASLSIIGSIGTIILI) form a helical membrane-spanning segment. The Cytoplasmic portion of the chain corresponds to 38 to 123 (KIRNKKQEKK…NNNQKTKVSH (86 aa)). A helical membrane pass occupies residues 124 to 144 (FIINLSIANLLASIFMITIKL). Over 145–176 (MMIHFNDKFIKVLPSTANHSFNALISVCTIGN) the chain is Extracellular. N-linked (GlcNAc...) asparagine glycosylation is present at Asn162. A disulfide bond links Cys172 and Cys287. A helical membrane pass occupies residues 177–197 (GVIGFSFISTFFWTLAISMYI). Topologically, residues 198–253 (YQQFLSSSTINSNNNNNNINNINNNNNNNINNINNSKNNNSINNFNNSNKSNKIIK) are cytoplasmic. The helical transmembrane segment at 254-274 (MLFYFVCWVIPFVLGSILVSG) threads the bilayer. Residues 275–295 (SRLIELNSDLPWCSIDSNIQL) lie on the Extracellular side of the membrane. A helical membrane pass occupies residues 296–316 (ISFYFPLIICLLATTFFTILI). The Cytoplasmic segment spans residues 317-342 (KYKFSNDKLACSSSSLINLQSKIIQR). A helical membrane pass occupies residues 343 to 363 (LILFLIVILVCWVPSLISFFI). Residues 364–372 (SFFSKNCKQ) are Extracellular-facing. Residues 373–393 (FLWLEIISSTIQSCQGILNFL) traverse the membrane as a helical segment. The Cytoplasmic portion of the chain corresponds to 394 to 470 (SYLSIFKKLK…DFDNNQIQEK (77 aa)).

The protein belongs to the G-protein coupled receptor 5 family.

Its subcellular location is the membrane. Functionally, receptor for cAMP. In Dictyostelium discoideum (Social amoeba), this protein is Cyclic AMP receptor-like protein D (crlD).